The primary structure comprises 793 residues: Transcription factor castor (793 aa).

The segment covering 44–53 (NEDISSSTSV) has biased composition (polar residues). Disordered stretches follow at residues 44 to 101 (NEDI…NLIA), 199 to 259 (VTST…HTNA), and 272 to 296 (LEST…DSSY). Low complexity-rich tracts occupy residues 54–68 (QQQQ…QQPQ), 81–98 (SSQN…PNSN), and 210–221 (ATPAPSAGATAG). Residue threonine 211 is modified to Phosphothreonine. Residue serine 215 is modified to Phosphoserine. The segment covering 233 to 242 (ESADDDEDDD) has biased composition (acidic residues). Residues 245 to 254 (LSSLTSCSSS) show a composition bias toward low complexity. Positions 273 to 284 (ESTTDSLDSPSM) are enriched in polar residues. The segment at 377–402 (FHCHEEPCQGKILSKKDDIIRHLKWH) adopts a C2H2-type 1; atypical zinc-finger fold. 3 consecutive C2H2-type zinc fingers follow at residues 439–463 (YHCV…ANFH), 498–522 (YHCC…KTYH), and 556–580 (IHCV…KRKH). Residues 599 to 682 (EESSLDAMPQ…RLKVEDESSN (84 aa)) form a disordered region. A compositionally biased stretch (low complexity) spans 608 to 629 (QQQQQQQQQQPTSLSQSQSSSS). Residues 630–644 (VCGGSNTSTPLSSLS) show a composition bias toward polar residues. Positions 650-662 (ARKRGRPPKKIQL) form a DNA-binding region, a.T hook.

In terms of tissue distribution, expressed in a specific subset of neuroblasts in the ventral nerve cord and the procephalic region in the embryo. Expressed in many, if not all, late delaminating NBs, and in early NBs, but only after they have undergone several rounds of ganglion mother cell-producing divisions.

Its subcellular location is the nucleus. Functionally, transcription factor that specifies expression of key genes in developing central nervous system (CNS). Essential for many, if not all, late developing neuroblastoma (NB) sublineages. Binds to the 5'-[CG]C[CT][CT]AAAAA[AT]-3' DNA sequence, like hb, suggesting that cas and hb act as a late regulators in early and late CNS NB sublineage, respectively. Acts by repressing expression of nub/pdm-1 and pdm2/pdm-2 POU genes, and restrict their pattern of expression in appropriate cells. Required for a full expression of vvl/drifter and acj6/I-POU; it is however unknown whether it directly activates these genes. Controls engrailed (en) expression in the ventral nerve cord. The sequence is that of Transcription factor castor (cas) from Drosophila melanogaster (Fruit fly).